The chain runs to 381 residues: Probable tRNA sulfurtransferase (381 aa).

The THUMP domain occupies 52 to 155 (LTNLDALKYV…DASTYIFIDY (104 aa)). ATP-binding positions include 173–174 (LM), 198–199 (NF), Arg-255, Gly-277, and Gln-286.

Belongs to the ThiI family.

The protein resides in the cytoplasm. The catalysed reaction is [ThiI sulfur-carrier protein]-S-sulfanyl-L-cysteine + a uridine in tRNA + 2 reduced [2Fe-2S]-[ferredoxin] + ATP + H(+) = [ThiI sulfur-carrier protein]-L-cysteine + a 4-thiouridine in tRNA + 2 oxidized [2Fe-2S]-[ferredoxin] + AMP + diphosphate. It catalyses the reaction [ThiS sulfur-carrier protein]-C-terminal Gly-Gly-AMP + S-sulfanyl-L-cysteinyl-[cysteine desulfurase] + AH2 = [ThiS sulfur-carrier protein]-C-terminal-Gly-aminoethanethioate + L-cysteinyl-[cysteine desulfurase] + A + AMP + 2 H(+). The protein operates within cofactor biosynthesis; thiamine diphosphate biosynthesis. Catalyzes the ATP-dependent transfer of a sulfur to tRNA to produce 4-thiouridine in position 8 of tRNAs, which functions as a near-UV photosensor. Also catalyzes the transfer of sulfur to the sulfur carrier protein ThiS, forming ThiS-thiocarboxylate. This is a step in the synthesis of thiazole, in the thiamine biosynthesis pathway. The sulfur is donated as persulfide by IscS. The protein is Probable tRNA sulfurtransferase of Metamycoplasma arthritidis (strain 158L3-1) (Mycoplasma arthritidis).